Consider the following 793-residue polypeptide: MADDFITTIDSDDEVSNYGEPSALPKIKDDELDPDFQFDLGGGRSEGLDLWGGDEVQGVKKGNEPINVDDIIERKRGKPIRAFKDRKRKRDEDATSEDDLEEDEEEEGDSNDDSDAAKSGDSEEDEMDVDMSEGDGDEEDENEIESLKREDESDEEEEEEEDDYDEEGENEVVDSDSESEEETAAEIARKDAFFSSDPTTTDPTLPSSFTAMNLSRPLLRALTSLQFTAPTPIQARAIPLALLGRDILGSAVTGSGKTAAFMVPILERLCYRDRGKGGAACRVLVLCPTRELAVQCEAVGKALAEKGGLDVRFALLVGGLSLNAQAHTLRTLPDILIATPGRLIDHLTNTPSFTLSALDVLVIDEADRMLEAGFTDELEEIIKACPRSRQTMLFSATMTDSVDELVKLSLDKPIRVFVDPKRNTARGLTQEFVRIRSDDSRSPSLLALCKRTIREKCIIFFRSKALAHQMRIVFGLFGLKAAELHGNLTQEQRLQALNDFKAGTVDYLLATDLASRGLDIKGVETVINYDMPGQLAQYTHRVGRTARAGRKGRSVSLVGEADRKMLKAAIKQAEADQVRHRIIPSEAVTAMKEKLEEFKDDIQEILKEEKEEKLLRQADMEIKKGQNMVEHEAEIFSRPARTWFQSGKEKQASKSAGKDAYVGSFPSTGKSAEKEKEKLKRGKYDGLSRRLKRRKMAIEEDAADAAAARKTEMGIRAAKKNALPKKITEPQPRLEKAGKGKDKKKGKARRVTGGKGSAFDSEGKKSHEGMRAKPAKVNLEKGKKKGGKGKGRK.

Residues 1–208 form a disordered region; it reads MADDFITTID…TTTDPTLPSS (208 aa). Basic residues predominate over residues 75–89; it reads KRGKPIRAFKDRKRK. Acidic residues-rich tracts occupy residues 94–114, 122–144, and 152–184; these read ATSE…NDDS, SEED…ENEI, and ESDE…EETA. The segment covering 193–208 has biased composition (low complexity); it reads FFSSDPTTTDPTLPSS. The Q motif signature appears at 207–235; the sequence is SSFTAMNLSRPLLRALTSLQFTAPTPIQA. The Helicase ATP-binding domain maps to 238 to 416; that stretch reads IPLALLGRDI…KLSLDKPIRV (179 aa). 251–258 is an ATP binding site; it reads AVTGSGKT. Positions 364–367 match the DEAD box motif; it reads DEAD. In terms of domain architecture, Helicase C-terminal spans 427–606; that stretch reads GLTQEFVRIR…EFKDDIQEIL (180 aa). Residues 560 to 630 are a coiled coil; it reads EADRKMLKAA…EIKKGQNMVE (71 aa). The disordered stretch occupies residues 645–793; that stretch reads QSGKEKQASK…KKGGKGKGRK (149 aa). 2 stretches are compositionally biased toward basic and acidic residues: residues 671–688 and 726–740; these read SAEK…DGLS and KITE…AGKG. Over residues 741-752 the composition is skewed to basic residues; the sequence is KDKKKGKARRVT. Over residues 761 to 771 the composition is skewed to basic and acidic residues; it reads SEGKKSHEGMR. Positions 782–793 are enriched in basic residues; sequence GKKKGGKGKGRK.

Belongs to the DEAD box helicase family. DDX27/DRS1 subfamily. As to quaternary structure, associates with pre-ribosomal particles.

It is found in the nucleus. It localises to the nucleolus. It carries out the reaction ATP + H2O = ADP + phosphate + H(+). In terms of biological role, ATP-binding RNA helicase involved in ribosome assembly. The chain is ATP-dependent RNA helicase DRS1 (DRS1) from Cryptococcus neoformans var. neoformans serotype D (strain JEC21 / ATCC MYA-565) (Filobasidiella neoformans).